Here is a 65-residue protein sequence, read N- to C-terminus: Protein MalX (65 aa).

This is Protein MalX (malX) from Klebsiella pneumoniae.